A 164-amino-acid polypeptide reads, in one-letter code: Arginine repressor (164 aa).

It belongs to the ArgR family.

It is found in the cytoplasm. It participates in amino-acid biosynthesis; L-arginine biosynthesis [regulation]. Regulates arginine biosynthesis genes. The polypeptide is Arginine repressor (Mycobacterium avium (strain 104)).